Reading from the N-terminus, the 84-residue chain is Large ribosomal subunit protein bL31B (84 aa).

This sequence belongs to the bacterial ribosomal protein bL31 family. Type B subfamily. As to quaternary structure, part of the 50S ribosomal subunit.

This chain is Large ribosomal subunit protein bL31B, found in Photorhabdus laumondii subsp. laumondii (strain DSM 15139 / CIP 105565 / TT01) (Photorhabdus luminescens subsp. laumondii).